A 250-amino-acid chain; its full sequence is uncharacterized protein (250 aa).

A Glycyl lysine isopeptide (Lys-Gly) (interchain with G-Cter in ubiquitin) cross-link involves residue Lys-17. A disordered region spans residues 30–67; the sequence is REEDYVATSKDNIHHHPCDWSAKPSQRQNENEQKSTIR.

This is an uncharacterized protein from Saccharomyces cerevisiae (strain ATCC 204508 / S288c) (Baker's yeast).